The sequence spans 242 residues: Megakaryocyte and platelet inhibitory receptor G6b (242 aa).

An N-terminal signal peptide occupies residues 1-17 (MALVLPLLPLLLSKVQG). N32 and N112 each carry an N-linked (GlcNAc...) asparagine glycan. Residues 141-161 (VLIPLLGVGLVLGLGVAGVVW) form a helical membrane-spanning segment. Short sequence motifs (ITIM motif) lie at residues 210–215 (LHYADL) and 236–241 (TVYAVV). Y212 is subject to Phosphotyrosine.

As to quaternary structure, interacts (via ITIM motif) with PTPN6 and PTPN11. Binds to heparin. In terms of processing, N-glycosylated. May be O-glycosylated. Post-translationally, phosphorylated. As to expression, expressed in mature megakaryocytes and platelets. Not expressed by immature megakaryocytes.

Its subcellular location is the cell membrane. Inhibitory receptor that acts as a critical regulator of hematopoietic lineage differentiation, megakaryocyte function and platelet production. Inhibits platelet aggregation and activation by agonists such as ADP and collagen-related peptide. This regulation of megakaryocate function as well as platelet production ann activation is done through the inhibition (via the 2 ITIM motifs) of the receptors CLEC1B and GP6:FcRgamma signaling. Appears to operate in a calcium-independent manner. The sequence is that of Megakaryocyte and platelet inhibitory receptor G6b from Mus musculus (Mouse).